Consider the following 151-residue polypeptide: MERPEPELIRQSWRAVSRSPLEHGTVLFARLFALEPDLLPLFQYNCRQFSSPEDCLSSPEFLDHIRKVMLVIDAAVTNVEDLSSLEEYLASLGRKHRAVGVKLSSFSTVGESLLYMLEKCLGPAFTPATRAAWSQLYGAVVQAMSRGWDGE.

The 149-residue stretch at 1–149 (MERPEPELIR…VVQAMSRGWD (149 aa)) folds into the Globin domain. A disulfide bridge connects residues C46 and C55. Heme b-binding residues include H64 and H96.

This sequence belongs to the globin family. As to quaternary structure, monomer. Homodimer and homotetramer; disulfide-linked. Mainly monomeric but also detected as part of homodimers and homotetramers. Interacts with 14-3-3 proteins; regulates the phosphorylation of NGB. Could interact (ferrous form) with G-alpha(i) proteins (GTP-bound form). In terms of processing, phosphorylated during hypoxia by ERK1/ERK2. Phosphorylation regulates the heme pocket hexacoordination preventing the association of His-64 with the heme metal center. Thereby, promotes the access of dioxygen and nitrite to the heme and stimulates the nitrite reductase activity. Phosphorylation during hypoxia is stabilized by 14-3-3 proteins. An intramolecular Cys-46/Cys-55 disulfide bond, not necessarily present in orthologs, regulates the heme pocket hexacoordination preventing the association of His-64 with the heme metal center. Thereby, promotes the access of dioxygen and nitrite to the heme and stimulates the nitrite reductase activity. As to expression, predominantly expressed in brain, the strongest expression is seen in the frontal lobe, the subthalamic nucleus and the thalamus.

It localises to the cytoplasm. The protein localises to the cytosol. It is found in the mitochondrion matrix. The enzyme catalyses Fe(III)-heme b-[protein] + nitric oxide + H2O = Fe(II)-heme b-[protein] + nitrite + 2 H(+). Monomeric globin with a bis-histidyl six-coordinate heme-iron atom through which it can bind dioxygen, carbon monoxide and nitric oxide. Could help transport oxygen and increase its availability to the metabolically active neuronal tissues, though its low quantity in tissues as well as its high affinity for dioxygen, which may limit its oxygen-releasing ability, argue against it. The ferrous/deoxygenated form exhibits a nitrite reductase activity and it could produce nitric oxide which in turn inhibits cellular respiration in response to hypoxia. In its ferrous/deoxygenated state, it may also exhibit GDI (Guanine nucleotide Dissociation Inhibitor) activity toward heterotrimeric G-alpha proteins, thereby regulating signal transduction to facilitate neuroprotective responses in the wake of hypoxia and associated oxidative stress. This chain is Neuroglobin, found in Homo sapiens (Human).